The following is a 227-amino-acid chain: tRNA (guanine-N(1)-)-methyltransferase (227 aa).

Residues Gly112 and 132–137 (IGDFIL) each bind S-adenosyl-L-methionine.

The protein belongs to the RNA methyltransferase TrmD family. As to quaternary structure, homodimer.

The protein resides in the cytoplasm. The catalysed reaction is guanosine(37) in tRNA + S-adenosyl-L-methionine = N(1)-methylguanosine(37) in tRNA + S-adenosyl-L-homocysteine + H(+). Specifically methylates guanosine-37 in various tRNAs. This is tRNA (guanine-N(1)-)-methyltransferase from Sulfurovum sp. (strain NBC37-1).